We begin with the raw amino-acid sequence, 308 residues long: Ribosomal RNA small subunit methyltransferase H (308 aa).

Residues 36 to 38 (GGH), D55, F82, D103, and Q110 each bind S-adenosyl-L-methionine.

Belongs to the methyltransferase superfamily. RsmH family.

The protein localises to the cytoplasm. The catalysed reaction is cytidine(1402) in 16S rRNA + S-adenosyl-L-methionine = N(4)-methylcytidine(1402) in 16S rRNA + S-adenosyl-L-homocysteine + H(+). Specifically methylates the N4 position of cytidine in position 1402 (C1402) of 16S rRNA. This Helicobacter pylori (strain ATCC 700392 / 26695) (Campylobacter pylori) protein is Ribosomal RNA small subunit methyltransferase H.